A 62-amino-acid polypeptide reads, in one-letter code: Large ribosomal subunit protein bL33 (62 aa).

The protein belongs to the bacterial ribosomal protein bL33 family.

The sequence is that of Large ribosomal subunit protein bL33 from Parabacteroides distasonis (strain ATCC 8503 / DSM 20701 / CIP 104284 / JCM 5825 / NCTC 11152).